A 291-amino-acid chain; its full sequence is Pantothenate synthetase (291 aa).

33–40 (MGALHEGH) provides a ligand contact to ATP. Catalysis depends on His-40, which acts as the Proton donor. (R)-pantoate is bound at residue Gln-64. Gln-64 is a beta-alanine binding site. An ATP-binding site is contributed by 157–160 (GEKD). (R)-pantoate is bound at residue Gln-163. Residues Val-186 and 194–197 (LSSR) contribute to the ATP site.

This sequence belongs to the pantothenate synthetase family. As to quaternary structure, homodimer.

It localises to the cytoplasm. The catalysed reaction is (R)-pantoate + beta-alanine + ATP = (R)-pantothenate + AMP + diphosphate + H(+). The protein operates within cofactor biosynthesis; (R)-pantothenate biosynthesis; (R)-pantothenate from (R)-pantoate and beta-alanine: step 1/1. Its function is as follows. Catalyzes the condensation of pantoate with beta-alanine in an ATP-dependent reaction via a pantoyl-adenylate intermediate. The chain is Pantothenate synthetase from Rubrobacter xylanophilus (strain DSM 9941 / JCM 11954 / NBRC 16129 / PRD-1).